Consider the following 155-residue polypeptide: Small ribosomal subunit protein uS7 (155 aa).

This sequence belongs to the universal ribosomal protein uS7 family. Part of the 30S ribosomal subunit. Contacts proteins S9 and S11.

One of the primary rRNA binding proteins, it binds directly to 16S rRNA where it nucleates assembly of the head domain of the 30S subunit. Is located at the subunit interface close to the decoding center, probably blocks exit of the E-site tRNA. The chain is Small ribosomal subunit protein uS7 from Nautilia profundicola (strain ATCC BAA-1463 / DSM 18972 / AmH).